The primary structure comprises 424 residues: Enolase (424 aa).

(2R)-2-phosphoglycerate is bound at residue Q163. The Proton donor role is filled by E205. D242, E285, and D312 together coordinate Mg(2+). Residues K337, R366, S367, and K388 each contribute to the (2R)-2-phosphoglycerate site. K337 functions as the Proton acceptor in the catalytic mechanism.

This sequence belongs to the enolase family. The cofactor is Mg(2+).

It is found in the cytoplasm. It localises to the secreted. The protein localises to the cell surface. It carries out the reaction (2R)-2-phosphoglycerate = phosphoenolpyruvate + H2O. The protein operates within carbohydrate degradation; glycolysis; pyruvate from D-glyceraldehyde 3-phosphate: step 4/5. Its function is as follows. Catalyzes the reversible conversion of 2-phosphoglycerate (2-PG) into phosphoenolpyruvate (PEP). It is essential for the degradation of carbohydrates via glycolysis. The protein is Enolase of Roseobacter denitrificans (strain ATCC 33942 / OCh 114) (Erythrobacter sp. (strain OCh 114)).